Here is a 644-residue protein sequence, read N- to C-terminus: MADSEGTDGEGTGCNGWFFVQAIVDKKTGDKISDDEDENATDTGSDLVDFIDDTTTICVQAERETAQALFNVQEAQRDAREMHVLKRKFGCSIENSSEKAAAGKKAKSPLQEISVNVNHPKVKRRLITVPDSGYGYSEVEMLETQVTVENTGNGDSNGSVCSDSQIDCSDSSNMDVENIVPTSPTNQLLQLLHSKNKKAAMYAKFKELYGLSFQDLVRTFKSDRTTCSDWVTAIFGVNPTVAEGFKTLIQPYVLYAHIQCLDCAWGVVILALLRYKCGKNRITVAKGLSTLLHVPDTCMLIEPPKLRSGVAALYWYRTGMSNISEVIGETPEWIQRLTIIQHGVDDSVFDLSEMIQWAFDNDLTDESDIAYEYALIADSNSNAAAFLKSNCQAKYLKDCAVMCRHYKRAQKRQMSMSQWIKWRCDKIEEGGDWKPIVQFLRYQGVEFITFLCALKDFLKGTPKRNCIVLCGPANTGKSYFGMSLLHFLQGTVISHVNSNSHFWLEPLTDRKLAMLDDATDSCWTYFDTYMRNALDGNPISVDRKHRHLVQIKCPPMLITSNTNPVTDNRWPYLNSRLMVFKFPNKLPFDKNRNPVYTINDRNWKCFFERTWCRLDLNEEEEDADSDGHPFAAFKCVTGSNIRTL.

Positions 86–88 match the Nuclear localization signal motif; that stretch reads KRK. A phosphoserine; by host mark is found at serine 92 and serine 96. Positions 180-346 are DNA-binding region; that stretch reads VPTSPTNQLL…LTIIQHGVDD (167 aa). Positions 445–595 constitute an SF3 helicase domain; it reads VEFITFLCAL…LPFDKNRNPV (151 aa). ATP is bound at residue 471-478; the sequence is GPANTGKS. Residue lysine 552 forms a Glycyl lysine isopeptide (Lys-Gly) (interchain with G-Cter in SUMO) linkage.

Belongs to the papillomaviridae E1 protein family. Can form hexamers. Interacts with E2 protein; this interaction increases E1 DNA binding specificity. Interacts with host DNA polymerase subunit POLA2. Interacts with host single stranded DNA-binding protein RPA1. Interacts with host TOP1; this interaction stimulates the enzymatic activity of TOP1. Post-translationally, phosphorylated. In terms of processing, sumoylated.

It localises to the host nucleus. The enzyme catalyses Couples ATP hydrolysis with the unwinding of duplex DNA by translocating in the 3'-5' direction.. The catalysed reaction is ATP + H2O = ADP + phosphate + H(+). Functionally, ATP-dependent DNA 3'-5' helicase required for initiation of viral DNA replication. It forms a complex with the viral E2 protein. The E1-E2 complex binds to the replication origin which contains binding sites for both proteins. During the initial step, a dimer of E1 interacts with a dimer of protein E2 leading to a complex that binds the viral origin of replication with high specificity. Then, a second dimer of E1 displaces the E2 dimer in an ATP-dependent manner to form the E1 tetramer. Following this, two E1 monomers are added to each half of the site, which results in the formation of two E1 trimers on the viral ori. Subsequently, two hexamers will be created. The double hexamer acts as a bi-directional helicase machinery and unwinds the viral DNA and then recruits the host DNA polymerase to start replication. The chain is Replication protein E1 from Human papillomavirus 59.